A 1402-amino-acid chain; its full sequence is Transcription elongation factor spt-6 (1402 aa).

Positions 1 to 199 (MSNSMRDLID…PKDRGLNIDT (199 aa)) are disordered. Composition is skewed to acidic residues over residues 10-28 (DGEA…DEEA), 40-52 (DSSE…EDEE), 62-75 (IVDE…EDSD), and 90-102 (EEEE…DLDL). A compositionally biased stretch (basic and acidic residues) spans 123-135 (HRDDHRPTERRGL). Residues 161-176 (DEFDDFIEDDYPEDDE) are compositionally biased toward acidic residues. Basic and acidic residues predominate over residues 177-199 (ERRHREEDEEVARPKDRGLNIDT). An S1 motif domain is found at 1094–1161 (GMIVAANVRV…KEFVSKLSMR (68 aa)). The 98-residue stretch at 1209–1306 (PLFKPFNSTQ…KKVDELMQCD (98 aa)) folds into the SH2 domain.

The protein belongs to the SPT6 family.

It is found in the nucleus. It localises to the chromosome. Its function is as follows. Histone H3-H4 chaperone that plays a role in maintenance of chromatin structure during RNA polymerase II transcription elongation thereby repressing transcription initiation from cryptic promoters. Mediates the reassembly of nucleosomes onto the promoters of at least a selected set of genes during repression; the nucleosome reassembly is essential for transcriptional repression. Essential for viability. The chain is Transcription elongation factor spt-6 (spt-6) from Neurospora crassa (strain ATCC 24698 / 74-OR23-1A / CBS 708.71 / DSM 1257 / FGSC 987).